We begin with the raw amino-acid sequence, 332 residues long: N-arachidonyl glycine receptor (332 aa).

Residues 1 to 26 (MTTPHSQAQPGLPIDPHPDEYKVAAL) lie on the Extracellular side of the membrane. The helical transmembrane segment at 27-47 (VFYSCIFIIGLFVNVTALWVF) threads the bilayer. The Cytoplasmic portion of the chain corresponds to 48–56 (SCTTKKRTT). Residues 57–77 (VTVYMMNVALLDLVFIMSLPF) form a helical membrane-spanning segment. Topologically, residues 78–95 (RMLYYAKGEWPFGEYFCR) are extracellular. Cys-94 and Cys-173 are joined by a disulfide. Residues 96 to 116 (ILGALTVFYPSIALWLLAFIS) form a helical membrane-spanning segment. The Cytoplasmic portion of the chain corresponds to 117–138 (ADRYMAIVQPKYAKELKNTCKA). The chain crosses the membrane as a helical span at residues 139–159 (VMACVGVWIMTLTTTIPLLLL). The Extracellular portion of the chain corresponds to 160–192 (YEDPDTASSTPPTCLKISDIIYLKAINALNFTR). N-linked (GlcNAc...) asparagine glycosylation occurs at Asn-189. A helical membrane pass occupies residues 193 to 213 (LIFFFLIPLFIMIGCYLVIIH). The Cytoplasmic segment spans residues 214–233 (SLLHGKTSKLKPKVKEKSIR). The chain crosses the membrane as a helical span at residues 234 to 254 (IIITLMVQVLVCFMPFHICFA). Over 255–269 (FLMLGGDENSYNPWG) the chain is Extracellular. The helical transmembrane segment at 270-290 (AFTTFLMNLSTCLDVILYYIV) threads the bilayer. The Cytoplasmic portion of the chain corresponds to 291 to 332 (SKQFQARVISVMLYRNYLRSVRRKSFRSGSLRSLSNINSEML). Phosphoserine is present on Ser-323.

The protein belongs to the G-protein coupled receptor 1 family.

It localises to the cell membrane. Its subcellular location is the cytoplasmic vesicle membrane. Its function is as follows. G protein-coupled receptor (GPCR) that plays a role in diverse physiological processes particularly within the immune and nervous systems. Becomes active when triggered by various endogenous ligands including endocannabinoid N-arachidonyl glycine (NAGly), delta-9-tetrahydrocannabinol or resolvin D2/RvD2 derived from the omega-3 fatty acid docosahexaenoic acid (DHA). Upon RvD2 binding, facilitates the resolution of inflammation, aiding in tissue repair and homeostasis. Mechanistically, RvD2 ligation initiates Galphas protein coupling, activation of cAMP-PKA signaling pathway and phosphorylation of STAT3, leading to RvD2-stimulated macrophage phagocytosis. Mediates NAGly-induced process of reorganization of actin filaments and induction of acrosomal exocytosis. Activation by N-arachidonoyl glycine (NAGly) can also induce apoptosis in macrophages. Plays a role in homeostasis of CD8+ subsets of intraepithelial lymphocytes (IELs) (CD8alphaalpha and CD8alphabeta IELs) in small intestine by supporting preferential migration of CD8alphaalpha T-cells to intraepithelial compartment over lamina propria compartment, and by mediating their reconstitution into small intestine after bone marrow transplant. Participates also in hypotensive responses, mediating reduction in intraocular and blood pressure. The protein is N-arachidonyl glycine receptor (GPR18) of Bos taurus (Bovine).